A 336-amino-acid chain; its full sequence is Holliday junction branch migration complex subunit RuvB (336 aa).

The interval 2-186 (QDQEEERMIT…FGVICKLELY (185 aa)) is large ATPase domain (RuvB-L). ATP-binding positions include Leu-25, Arg-26, Gly-67, Lys-70, Thr-71, Thr-72, 133-135 (EDF), Arg-176, Tyr-186, and Arg-223. Thr-71 contacts Mg(2+). The tract at residues 187 to 257 (NNKQLTAIVK…VAEEALILLE (71 aa)) is small ATPAse domain (RuvB-S). The segment at 260 to 336 (SLGLDNTDKK…YEHFNIPSAE (77 aa)) is head domain (RuvB-H). Arg-296, Arg-315, and Arg-320 together coordinate DNA.

The protein belongs to the RuvB family. As to quaternary structure, homohexamer. Forms an RuvA(8)-RuvB(12)-Holliday junction (HJ) complex. HJ DNA is sandwiched between 2 RuvA tetramers; dsDNA enters through RuvA and exits via RuvB. An RuvB hexamer assembles on each DNA strand where it exits the tetramer. Each RuvB hexamer is contacted by two RuvA subunits (via domain III) on 2 adjacent RuvB subunits; this complex drives branch migration. In the full resolvosome a probable DNA-RuvA(4)-RuvB(12)-RuvC(2) complex forms which resolves the HJ.

It is found in the cytoplasm. The catalysed reaction is ATP + H2O = ADP + phosphate + H(+). Its function is as follows. The RuvA-RuvB-RuvC complex processes Holliday junction (HJ) DNA during genetic recombination and DNA repair, while the RuvA-RuvB complex plays an important role in the rescue of blocked DNA replication forks via replication fork reversal (RFR). RuvA specifically binds to HJ cruciform DNA, conferring on it an open structure. The RuvB hexamer acts as an ATP-dependent pump, pulling dsDNA into and through the RuvAB complex. RuvB forms 2 homohexamers on either side of HJ DNA bound by 1 or 2 RuvA tetramers; 4 subunits per hexamer contact DNA at a time. Coordinated motions by a converter formed by DNA-disengaged RuvB subunits stimulates ATP hydrolysis and nucleotide exchange. Immobilization of the converter enables RuvB to convert the ATP-contained energy into a lever motion, pulling 2 nucleotides of DNA out of the RuvA tetramer per ATP hydrolyzed, thus driving DNA branch migration. The RuvB motors rotate together with the DNA substrate, which together with the progressing nucleotide cycle form the mechanistic basis for DNA recombination by continuous HJ branch migration. Branch migration allows RuvC to scan DNA until it finds its consensus sequence, where it cleaves and resolves cruciform DNA. This chain is Holliday junction branch migration complex subunit RuvB, found in Alkaliphilus metalliredigens (strain QYMF).